A 569-amino-acid chain; its full sequence is Protein GPR108 (569 aa).

The N-terminal stretch at 1 to 34 (MAVSERRGLSGESPTQCRWGYLSLLVLTLSGCSG) is a signal peptide. 3 N-linked (GlcNAc...) asparagine glycosylation sites follow: N59, N111, and N182. The segment at 144 to 219 (LLPEAPTQSG…DPSGKEKDQV (76 aa)) is disordered. The segment covering 180–192 (KENQTAPQVSGDK) has biased composition (polar residues). A compositionally biased stretch (basic and acidic residues) spans 194–203 (TPGEHRHSSE). N226 and N230 each carry an N-linked (GlcNAc...) asparagine glycan. 7 consecutive transmembrane segments (helical) span residues 289–309 (LYLIMSACFLAADIFWVSVLC), 318–338 (IHWLMAALAFTKSVSLLFHSI), 362–382 (LLKGALLFITIALIGSGWAFV), 393–413 (IFGIVIPLQVLANVAYIVIES), 427–447 (ILFLVDLICCGAILFPVVWSI), 475–495 (VMVICYIYFTRIIAILLQVAV), and 499–519 (WQWLYQLLVESSTLAFFVLTG).

The protein belongs to the LU7TM family. In terms of tissue distribution, high expression in spleen, lung, stomach, large and small intestine, and thymus.

Its subcellular location is the golgi apparatus. It is found in the cis-Golgi network membrane. The protein resides in the trans-Golgi network membrane. It localises to the golgi apparatus membrane. May play a role in intracellular immune modulation by activating NF-kappaB response and attenuating Toll-like-receptor response. Its function is as follows. (Microbial infection) Plays an essential function in adeno-associated virus (AAV) transduction, across multiple serotypes except AAV5. May play a critical role in mediating the endosomal virus escape or in the AAV virions trafficking from endosomes to the nucleus. In Mus musculus (Mouse), this protein is Protein GPR108 (Gpr108).